Here is a 115-residue protein sequence, read N- to C-terminus: Large ribosomal subunit protein bL20c (115 aa).

It belongs to the bacterial ribosomal protein bL20 family.

It is found in the plastid. It localises to the chloroplast. Functionally, binds directly to 23S ribosomal RNA and is necessary for the in vitro assembly process of the 50S ribosomal subunit. It is not involved in the protein synthesizing functions of that subunit. The polypeptide is Large ribosomal subunit protein bL20c (Angiopteris evecta (Mule's foot fern)).